The chain runs to 238 residues: Large ribosomal subunit protein uL2 (238 aa).

The disordered stretch occupies residues 200-238 (HGGGLHQSVSRPSTVSRNAPPGRKVGHIAARRTGRKEGK). Residues 206 to 216 (QSVSRPSTVSR) are compositionally biased toward polar residues. Residues 223 to 238 (KVGHIAARRTGRKEGK) show a composition bias toward basic residues.

It belongs to the universal ribosomal protein uL2 family. As to quaternary structure, part of the 50S ribosomal subunit. Forms a bridge to the 30S subunit in the 70S ribosome.

Its function is as follows. One of the primary rRNA binding proteins. Required for association of the 30S and 50S subunits to form the 70S ribosome, for tRNA binding and peptide bond formation. It has been suggested to have peptidyltransferase activity; this is somewhat controversial. Makes several contacts with the 16S rRNA in the 70S ribosome. The protein is Large ribosomal subunit protein uL2 of Saccharolobus islandicus (strain L.S.2.15 / Lassen #1) (Sulfolobus islandicus).